The primary structure comprises 462 residues: Chromosomal replication initiator protein DnaA (462 aa).

Positions 1–84 (MAVSLWQQCI…RFDIGSRPSA (84 aa)) are domain I, interacts with DnaA modulators. The domain II stretch occupies residues 84 to 125 (AKKPSVPAPIAPTRVANTQTKATVGTTFNVQAEPMANANHRS). The interval 126-342 (NINPSYQFDN…GALNRVIANA (217 aa)) is domain III, AAA+ region. Glycine 170, glycine 172, lysine 173, and threonine 174 together coordinate ATP. The domain IV, binds dsDNA stretch occupies residues 343–462 (NFTGRPITID…YANLIRTLSS (120 aa)).

It belongs to the DnaA family. As to quaternary structure, oligomerizes as a right-handed, spiral filament on DNA at oriC.

The protein localises to the cytoplasm. Plays an essential role in the initiation and regulation of chromosomal replication. ATP-DnaA binds to the origin of replication (oriC) to initiate formation of the DNA replication initiation complex once per cell cycle. Binds the DnaA box (a 9 base pair repeat at the origin) and separates the double-stranded (ds)DNA. Forms a right-handed helical filament on oriC DNA; dsDNA binds to the exterior of the filament while single-stranded (ss)DNA is stabiized in the filament's interior. The ATP-DnaA-oriC complex binds and stabilizes one strand of the AT-rich DNA unwinding element (DUE), permitting loading of DNA polymerase. After initiation quickly degrades to an ADP-DnaA complex that is not apt for DNA replication. Binds acidic phospholipids. This is Chromosomal replication initiator protein DnaA from Shewanella baltica (strain OS195).